Consider the following 131-residue polypeptide: MYTILLIGIGGFIGAVLRYSLSGWVQNSFVNFPLGTLVVNIVGSFFLGLVMYLSEYQGLFSEETRILLTIGLLGAFTTLSTFSYESFRLLESSKLMQLTMNIVATVLFSIFAVYLGKISALNLAAYLRGIK.

The next 4 membrane-spanning stretches (helical) occupy residues 4–24, 32–52, 66–86, and 95–115; these read ILLIGIGGFIGAVLRYSLSGW, FPLGTLVVNIVGSFFLGLVMY, ILLTIGLLGAFTTLSTFSYES, and LMQLTMNIVATVLFSIFAVYL. Residues Gly-74 and Thr-77 each coordinate Na(+).

The protein belongs to the fluoride channel Fluc/FEX (TC 1.A.43) family.

It localises to the cell membrane. It catalyses the reaction fluoride(in) = fluoride(out). Na(+) is not transported, but it plays an essential structural role and its presence is essential for fluoride channel function. In terms of biological role, fluoride-specific ion channel. Important for reducing fluoride concentration in the cell, thus reducing its toxicity. This chain is Fluoride-specific ion channel FluC 1, found in Methanosarcina acetivorans (strain ATCC 35395 / DSM 2834 / JCM 12185 / C2A).